A 67-amino-acid polypeptide reads, in one-letter code: COP9 signalosome complex subunit 9 homolog (67 aa).

Positions 1–31 are disordered; that stretch reads MKPSLAADEMFSEGPGYMEMDESGGATGMMM.

The protein belongs to the CSN9 family. As to quaternary structure, probable component of the COP9 signalosome (CSN) complex.

Component of the COP9 signalosome complex (CSN), a complex involved in various cellular and developmental processes. The CSN complex is an essential regulator of the ubiquitin (Ubl) conjugation pathway by mediating the deneddylation of the cullin subunits of SCF-type E3 ligase complexes, leading to decrease the Ubl ligase activity. The sequence is that of COP9 signalosome complex subunit 9 homolog from Drosophila melanogaster (Fruit fly).